We begin with the raw amino-acid sequence, 494 residues long: Ceramide glucosyltransferase (494 aa).

Over 1 to 6 the chain is Lumenal; it reads MPLLMD. A helical transmembrane segment spans residues 7-27; it reads GLAYAGAIWSLIVFCVQAIGL. The Cytoplasmic portion of the chain corresponds to 28–337; the sequence is YQLFRSYSRP…VRWLRVRKWT (310 aa). Aspartate 95 is a short sequence motif (D1). A short sequence motif (D2) is located at residue aspartate 160. Residue aspartate 285 is a short sequence motif, D3. The Proton acceptor role is filled by aspartate 285. The short motif at 326–330 is the (Q/R)XXRW element; the sequence is RRVRW. The helical transmembrane segment at 338–358 threads the bilayer; the sequence is VLLATLVEPGVESMVCCMAFA. Residues 359–380 lie on the Lumenal side of the membrane; the sequence is HALTTTPWCPNPADWPIPHTWT. The helical transmembrane segment at 381–401 threads the bilayer; the sequence is ALWSIWLAAIAVWATLDYVVY. Residues 402–428 are Cytoplasmic-facing; it reads HFLHSCRSIEKDADSPDFAQGNELMKR. A helical transmembrane segment spans residues 429–449; it reads PFGAWILAWIGREILALPIWT. Over 450-494 the chain is Lumenal; it reads RAVLLGTTVTWRGTKFKVRPDQSVVDIPNAGAKSNGIGSTNRKVR.

This sequence belongs to the glycosyltransferase 2 family.

It localises to the golgi apparatus membrane. It catalyses the reaction an N-acylsphing-4-enine + UDP-alpha-D-glucose = a beta-D-glucosyl-(1&lt;-&gt;1')-N-acylsphing-4-enine + UDP + H(+). The protein operates within lipid metabolism; sphingolipid metabolism. In terms of biological role, catalyzes the final step in the biosynthesis of the membrane lipid glucosylceramide (GluCer), the transfer of glucose to ceramide. Glucosylceramides play important roles in growth, differentiation and pathogenicity. This chain is Ceramide glucosyltransferase, found in Pyricularia oryzae (strain 70-15 / ATCC MYA-4617 / FGSC 8958) (Rice blast fungus).